Consider the following 274-residue polypeptide: Lectizyme (274 aa).

The first 16 residues, 1–16, serve as a signal peptide directing secretion; sequence MKFFAVFALCVASVSA. A Peptidase S1 domain is found at 32–268; the sequence is IINGHEAEKG…FDKWIEDSIE (237 aa). A disulfide bridge connects residues cysteine 57 and cysteine 73. Residues histidine 72 and aspartate 119 each act as charge relay system in the active site. Disulfide bonds link cysteine 188–cysteine 204 and cysteine 215–cysteine 244. Serine 219 acts as the Charge relay system in catalysis.

It belongs to the peptidase S1 family. In terms of tissue distribution, expressed in the midgut.

The protein localises to the secreted. In terms of biological role, protein with lectin and protease activity involved in the establishment of trypanosome infections in tsetse flies. Binds D-glucosamine and agglutinates bloodstream-form trypanosomes and rabbit red blood cells. Capable of inducing transformation of bloodstream-form trypanosomes into procyclic (midgut) forms in vitro. In Glossina austeni (Savannah tsetse fly), this protein is Lectizyme (Gpl).